Consider the following 317-residue polypeptide: Succinate receptor 1 (317 aa).

Topologically, residues 1 to 27 (MAQNLSCENWLALENILKKYYLSAFYG) are extracellular. The N-linked (GlcNAc...) asparagine glycan is linked to N4. The helical transmembrane segment at 28-48 (IEFIVGMLGNFTVVFGYLFCM) threads the bilayer. Over 49-55 (KNWNSSN) the chain is Cytoplasmic. A helical transmembrane segment spans residues 56–76 (VYLFNLSISDLAFLCTLPMLI). Residues 77–99 (RSYATGNWTYGDVLCISNRYVLH) lie on the Extracellular side of the membrane. C91 and C168 are oxidised to a cystine. Residues 100-120 (ANLYTSILFLTFISIDRYLLM) traverse the membrane as a helical segment. Over 121-133 (KFPFREHILQKKE) the chain is Cytoplasmic. A helical transmembrane segment spans residues 134–154 (FAILISLAVWVLVTLEVLPML). Topologically, residues 155 to 181 (TFITSTPIEKGDSCVDYASSGNPKYSL) are extracellular. A helical transmembrane segment spans residues 182–202 (IYSLCLTLLGFLIPLSVMCFF). Residues 203–226 (YYKMVVFLKKRSQQQATVLSLNKP) lie on the Cytoplasmic side of the membrane. Residues 227-247 (LRLVVLAVVIFSVLFTPYHIM) traverse the membrane as a helical segment. At 248-276 (RNVRIASRLDSWPQGCSQKAIKCLYILTR) the chain is on the extracellular side. A helical membrane pass occupies residues 277-297 (PLAFLNSAVNPIFYFLVGDHF). Residues 298–317 (RDMLFSKLRQYFKSLTSFRL) are Cytoplasmic-facing.

It belongs to the G-protein coupled receptor 1 family. Expressed in retina.

It is found in the cell membrane. In terms of biological role, g protein-coupled receptor for succinate able to mediate signaling through Gq/GNAQ or Gi/GNAI second messengers depending on the cell type and the processes regulated. Succinate-SUCNR1 signaling serves as a link between metabolic stress, inflammation and energy homeostasisn. In macrophages, plays a range of immune-regulatory roles. During inflammation, succinate-SUCNR1 signaling may act as an anti-inflammatory mediator or boost inflammation depending on the inflammatory status of cells. Hyperpolarizes M2 macrophages versus M1 phenotype through Gq signaling by regulating the transcription of genes involved in immune function. In activated M1 macrophages, plays a pro-inflammatory role in response to LPS. Expressed in dendritic cells, where it is involved in the sensing of immunological danger and enhances immunity. Mediates succinate triggered intracelleular calcium mobilization, induces migratory responses and acts in synergy with Toll-like receptor ligands for the production of proinflammatory cytokines as well as an enhancement of antigen-specific activation of helper T cells. In the small intestine, mediates the activation of tuft cells by dietary succinate and triggers type 2 immunity. In adipocytes, plays an important role in the control of energy metabolism. In response to succinate, controls leptin expression in an AMPK-JNK-CEBPA-dependent as well as circadian clock-regulated manner. In muscle tissue, is expressed in non-muscle cells and coordinates muscle remodeling in response to the succinate produced during exercise training in a paracrine manner. In retina, acts as a mediator of vessel growth during retinal development. In response to succinate, regulates the production of angiogenic factors, including VEGF, by retinal ganglion neurons. The protein is Succinate receptor 1 (Sucnr1) of Rattus norvegicus (Rat).